The chain runs to 146 residues: Ferredoxin-type protein FwdE (146 aa).

4Fe-4S ferredoxin-type domains are found at residues 90–115 (IKLFWDENSCIACGSCLGCAALTLDN) and 116–145 (FTVGIDEDTCHLCASCIFRCPTNSLKFIKE). Residues cysteine 125, cysteine 128, cysteine 131, and cysteine 135 each contribute to the [4Fe-4S] cluster site.

The cofactor is [4Fe-4S] cluster.

The sequence is that of Ferredoxin-type protein FwdE (fwdE) from Methanocaldococcus jannaschii (strain ATCC 43067 / DSM 2661 / JAL-1 / JCM 10045 / NBRC 100440) (Methanococcus jannaschii).